The primary structure comprises 123 residues: Holo-[acyl-carrier-protein] synthase (123 aa).

Asp7 and Glu56 together coordinate Mg(2+).

It belongs to the P-Pant transferase superfamily. AcpS family. The cofactor is Mg(2+).

The protein resides in the cytoplasm. It carries out the reaction apo-[ACP] + CoA = holo-[ACP] + adenosine 3',5'-bisphosphate + H(+). Its function is as follows. Transfers the 4'-phosphopantetheine moiety from coenzyme A to a Ser of acyl-carrier-protein. In Carboxydothermus hydrogenoformans (strain ATCC BAA-161 / DSM 6008 / Z-2901), this protein is Holo-[acyl-carrier-protein] synthase.